The chain runs to 148 residues: UPF0179 protein Ta1159 (148 aa).

This sequence belongs to the UPF0179 family.

This is UPF0179 protein Ta1159 from Thermoplasma acidophilum (strain ATCC 25905 / DSM 1728 / JCM 9062 / NBRC 15155 / AMRC-C165).